The chain runs to 115 residues: Large ribosomal subunit protein uL24 (115 aa).

Disordered regions lie at residues 45 to 77 (VRQS…STGK) and 96 to 115 (KASG…KAAS).

Belongs to the universal ribosomal protein uL24 family. In terms of assembly, part of the 50S ribosomal subunit.

In terms of biological role, one of two assembly initiator proteins, it binds directly to the 5'-end of the 23S rRNA, where it nucleates assembly of the 50S subunit. Its function is as follows. One of the proteins that surrounds the polypeptide exit tunnel on the outside of the subunit. In Rhodopirellula baltica (strain DSM 10527 / NCIMB 13988 / SH1), this protein is Large ribosomal subunit protein uL24.